Reading from the N-terminus, the 239-residue chain is Small ribosomal subunit protein uS2 (239 aa).

Belongs to the universal ribosomal protein uS2 family.

The polypeptide is Small ribosomal subunit protein uS2 (Francisella tularensis subsp. holarctica (strain FTNF002-00 / FTA)).